A 174-amino-acid polypeptide reads, in one-letter code: 2-C-methyl-D-erythritol 2,4-cyclodiphosphate synthase (174 aa).

D13, H15, and H61 together coordinate a divalent metal cation. 13–15 (DAH) is a binding site for 4-CDP-2-C-methyl-D-erythritol 2-phosphate. 4-CDP-2-C-methyl-D-erythritol 2-phosphate contacts are provided by residues 75 to 77 (DIG), 149 to 152 (TTTD), F156, and H159.

The protein belongs to the IspF family. As to quaternary structure, homotrimer. It depends on a divalent metal cation as a cofactor.

The catalysed reaction is 4-CDP-2-C-methyl-D-erythritol 2-phosphate = 2-C-methyl-D-erythritol 2,4-cyclic diphosphate + CMP. The protein operates within isoprenoid biosynthesis; isopentenyl diphosphate biosynthesis via DXP pathway; isopentenyl diphosphate from 1-deoxy-D-xylulose 5-phosphate: step 4/6. Involved in the biosynthesis of isopentenyl diphosphate (IPP) and dimethylallyl diphosphate (DMAPP), two major building blocks of isoprenoid compounds. Catalyzes the conversion of 4-diphosphocytidyl-2-C-methyl-D-erythritol 2-phosphate (CDP-ME2P) to 2-C-methyl-D-erythritol 2,4-cyclodiphosphate (ME-CPP) with a corresponding release of cytidine 5-monophosphate (CMP). The polypeptide is 2-C-methyl-D-erythritol 2,4-cyclodiphosphate synthase (Bifidobacterium longum (strain NCC 2705)).